The following is a 431-amino-acid chain: Isochorismate synthase MenF (431 aa).

Lys-183 (proton acceptor) is an active-site residue. The Proton donor role is filled by Glu-233. Residues Glu-277 and Glu-414 each coordinate Mg(2+).

The protein belongs to the isochorismate synthase family. Mg(2+) serves as cofactor.

It catalyses the reaction chorismate = isochorismate. It participates in quinol/quinone metabolism; 1,4-dihydroxy-2-naphthoate biosynthesis; 1,4-dihydroxy-2-naphthoate from chorismate: step 1/7. The protein operates within quinol/quinone metabolism; menaquinone biosynthesis. Functionally, catalyzes the conversion of chorismate to isochorismate. The sequence is that of Isochorismate synthase MenF from Pasteurella multocida (strain Pm70).